The primary structure comprises 281 residues: Probable endonuclease 4 (281 aa).

His69, His109, Glu145, Asp179, His182, His216, Asp229, His231, and Glu261 together coordinate Zn(2+).

It belongs to the AP endonuclease 2 family. The cofactor is Zn(2+).

It carries out the reaction Endonucleolytic cleavage to 5'-phosphooligonucleotide end-products.. Its function is as follows. Endonuclease IV plays a role in DNA repair. It cleaves phosphodiester bonds at apurinic or apyrimidinic (AP) sites, generating a 3'-hydroxyl group and a 5'-terminal sugar phosphate. In Yersinia enterocolitica serotype O:8 / biotype 1B (strain NCTC 13174 / 8081), this protein is Probable endonuclease 4.